A 290-amino-acid polypeptide reads, in one-letter code: Putative speedy protein-like protein 3 (290 aa).

Residues 16–50 (GVDPSPPCRSLGWKRKKEWSDESEEEPEKELAPEP) are disordered. Positions 36 to 50 (DESEEEPEKELAPEP) are enriched in acidic residues.

The protein belongs to the Speedy/Ringo family.

The polypeptide is Putative speedy protein-like protein 3 (Homo sapiens (Human)).